Consider the following 415-residue polypeptide: uncharacterized protein (415 aa).

The TRAM domain maps to 1–52 (MQDLTINAIGAQGDGLARTADGKPAFVPLTLPGEVVRAKMDGARGEVVEILA). Residues Cys-62, Cys-68, Cys-71, and Cys-147 each coordinate [4Fe-4S] cluster. The S-adenosyl-L-methionine site is built by Gln-252, Tyr-279, Glu-299, and Asp-347. Cys-373 acts as the Nucleophile in catalysis.

It belongs to the class I-like SAM-binding methyltransferase superfamily. RNA M5U methyltransferase family.

This is an uncharacterized protein from Caulobacter vibrioides (strain ATCC 19089 / CIP 103742 / CB 15) (Caulobacter crescentus).